The following is a 338-amino-acid chain: tRNA N6-adenosine threonylcarbamoyltransferase (338 aa).

The Fe cation site is built by histidine 111 and histidine 115. Substrate-binding positions include leucine 134 to glycine 138, aspartate 167, glycine 180, and asparagine 272. Aspartate 300 contacts Fe cation.

It belongs to the KAE1 / TsaD family. It depends on Fe(2+) as a cofactor.

The protein resides in the cytoplasm. It carries out the reaction L-threonylcarbamoyladenylate + adenosine(37) in tRNA = N(6)-L-threonylcarbamoyladenosine(37) in tRNA + AMP + H(+). Its function is as follows. Required for the formation of a threonylcarbamoyl group on adenosine at position 37 (t(6)A37) in tRNAs that read codons beginning with adenine. Is involved in the transfer of the threonylcarbamoyl moiety of threonylcarbamoyl-AMP (TC-AMP) to the N6 group of A37, together with TsaE and TsaB. TsaD likely plays a direct catalytic role in this reaction. This Nitrosomonas eutropha (strain DSM 101675 / C91 / Nm57) protein is tRNA N6-adenosine threonylcarbamoyltransferase.